The sequence spans 227 residues: Cytochrome c oxidase subunit 2 (227 aa).

Over 1–14 (MAYPFQLGLQDATS) the chain is Mitochondrial intermembrane. A helical transmembrane segment spans residues 15–45 (PIMEELLHFHDHTLMIVFLISSLVLYIISLM). The Mitochondrial matrix portion of the chain corresponds to 46 to 59 (LTTKLTHTSTMDAQ). Residues 60–87 (EVETVWTILPAIILISIALPSLRILYMM) traverse the membrane as a helical segment. Residues 88–227 (DEINNPSLTV…YFEAWSTLMM (140 aa)) are Mitochondrial intermembrane-facing. The Cu cation site is built by histidine 161, cysteine 196, glutamate 198, cysteine 200, histidine 204, and methionine 207. Residue glutamate 198 coordinates Mg(2+). Tyrosine 218 is modified (phosphotyrosine).

Belongs to the cytochrome c oxidase subunit 2 family. In terms of assembly, component of the cytochrome c oxidase (complex IV, CIV), a multisubunit enzyme composed of 14 subunits. The complex is composed of a catalytic core of 3 subunits MT-CO1, MT-CO2 and MT-CO3, encoded in the mitochondrial DNA, and 11 supernumerary subunits COX4I, COX5A, COX5B, COX6A, COX6B, COX6C, COX7A, COX7B, COX7C, COX8 and NDUFA4, which are encoded in the nuclear genome. The complex exists as a monomer or a dimer and forms supercomplexes (SCs) in the inner mitochondrial membrane with NADH-ubiquinone oxidoreductase (complex I, CI) and ubiquinol-cytochrome c oxidoreductase (cytochrome b-c1 complex, complex III, CIII), resulting in different assemblies (supercomplex SCI(1)III(2)IV(1) and megacomplex MCI(2)III(2)IV(2)). Found in a complex with TMEM177, COA6, COX18, COX20, SCO1 and SCO2. Interacts with TMEM177 in a COX20-dependent manner. Interacts with COX20. Interacts with COX16. Cu cation serves as cofactor.

It localises to the mitochondrion inner membrane. The catalysed reaction is 4 Fe(II)-[cytochrome c] + O2 + 8 H(+)(in) = 4 Fe(III)-[cytochrome c] + 2 H2O + 4 H(+)(out). Functionally, component of the cytochrome c oxidase, the last enzyme in the mitochondrial electron transport chain which drives oxidative phosphorylation. The respiratory chain contains 3 multisubunit complexes succinate dehydrogenase (complex II, CII), ubiquinol-cytochrome c oxidoreductase (cytochrome b-c1 complex, complex III, CIII) and cytochrome c oxidase (complex IV, CIV), that cooperate to transfer electrons derived from NADH and succinate to molecular oxygen, creating an electrochemical gradient over the inner membrane that drives transmembrane transport and the ATP synthase. Cytochrome c oxidase is the component of the respiratory chain that catalyzes the reduction of oxygen to water. Electrons originating from reduced cytochrome c in the intermembrane space (IMS) are transferred via the dinuclear copper A center (CU(A)) of subunit 2 and heme A of subunit 1 to the active site in subunit 1, a binuclear center (BNC) formed by heme A3 and copper B (CU(B)). The BNC reduces molecular oxygen to 2 water molecules using 4 electrons from cytochrome c in the IMS and 4 protons from the mitochondrial matrix. In Lycaon pictus (African wild dog), this protein is Cytochrome c oxidase subunit 2 (MT-CO2).